Consider the following 696-residue polypeptide: Two-component response regulator ORR22 (696 aa).

A Response regulatory domain is found at 27–142; it reads RVLAVDDDPV…ELRNIWQHVV (116 aa). The residue at position 78 (Asp-78) is a 4-aspartylphosphate. The tract at residues 154–214 is disordered; that stretch reads LDFSKECNKP…DYQENDEPSA (61 aa). Residues 176 to 185 show a composition bias toward polar residues; sequence TCGSSDQNGR. The segment covering 195–211 has biased composition (acidic residues); the sequence is GEDDDEGDDNDYQENDE. The myb-like GARP DNA-binding region spans 214 to 273; the sequence is AAKKPRVVWSVELHRKFVAAVNQLGIDKAVPKRILELMNVEKLTRENVASHLQKYRLYLK.

It belongs to the ARR family. Type-B subfamily. Two-component system major event consists of a His-to-Asp phosphorelay between a sensor histidine kinase (HK) and a response regulator (RR). In plants, the His-to-Asp phosphorelay involves an additional intermediate named Histidine-containing phosphotransfer protein (HPt). This multistep phosphorelay consists of a His-Asp-His-Asp sequential transfer of a phosphate group between first a His and an Asp of the HK protein, followed by the transfer to a conserved His of the HPt protein and finally the transfer to an Asp in the receiver domain of the RR protein.

The protein localises to the nucleus. In terms of biological role, transcriptional activator that binds specific DNA sequence. Functions as a response regulator involved in His-to-Asp phosphorelay signal transduction system. Phosphorylation of the Asp residue in the receiver domain activates the ability of the protein to promote the transcription of target genes. May directly activate some type-A response regulators in response to cytokinins. The chain is Two-component response regulator ORR22 from Oryza sativa subsp. indica (Rice).